Here is a 65-residue protein sequence, read N- to C-terminus: Hainantoxin-X-3 (65 aa).

The first 20 residues, 1–20 (MNMKILVLVAVLCLVVSTHA), serve as a signal peptide directing secretion. The propeptide occupies 21-37 (ERHSKTDMEDSPMIQER). Disulfide bonds link Cys-46–Cys-59 and Cys-55–Cys-64.

Belongs to the neurotoxin 36 family. 02 subfamily. In terms of tissue distribution, expressed by the venom gland.

The protein localises to the secreted. Functionally, reversibly blocks N-type calcium channels (Cav2.2/CACNA1B) in rat dorsal root ganglion cells. Elicits no toxic symptoms in either vertebrates or invertebrates during a period of 48 hours post-injection, when it was assayed in vivo by direct injection into mice and cockroaches. This is Hainantoxin-X-3 from Cyriopagopus hainanus (Chinese bird spider).